Here is an 80-residue protein sequence, read N- to C-terminus: Exodeoxyribonuclease 7 small subunit (80 aa).

Belongs to the XseB family. In terms of assembly, heterooligomer composed of large and small subunits.

It localises to the cytoplasm. It carries out the reaction Exonucleolytic cleavage in either 5'- to 3'- or 3'- to 5'-direction to yield nucleoside 5'-phosphates.. Bidirectionally degrades single-stranded DNA into large acid-insoluble oligonucleotides, which are then degraded further into small acid-soluble oligonucleotides. The sequence is that of Exodeoxyribonuclease 7 small subunit from Lactobacillus helveticus (strain DPC 4571).